Reading from the N-terminus, the 370-residue chain is 4-hydroxy-3-methylbut-2-en-1-yl diphosphate synthase (flavodoxin) (370 aa).

[4Fe-4S] cluster is bound by residues Cys-268, Cys-271, Cys-303, and Glu-310.

It belongs to the IspG family. It depends on [4Fe-4S] cluster as a cofactor.

It carries out the reaction (2E)-4-hydroxy-3-methylbut-2-enyl diphosphate + oxidized [flavodoxin] + H2O + 2 H(+) = 2-C-methyl-D-erythritol 2,4-cyclic diphosphate + reduced [flavodoxin]. Its pathway is isoprenoid biosynthesis; isopentenyl diphosphate biosynthesis via DXP pathway; isopentenyl diphosphate from 1-deoxy-D-xylulose 5-phosphate: step 5/6. Converts 2C-methyl-D-erythritol 2,4-cyclodiphosphate (ME-2,4cPP) into 1-hydroxy-2-methyl-2-(E)-butenyl 4-diphosphate. The protein is 4-hydroxy-3-methylbut-2-en-1-yl diphosphate synthase (flavodoxin) of Bacillus cereus (strain G9842).